The primary structure comprises 581 residues: Leucine aminopeptidase 3, chloroplastic (581 aa).

The N-terminal 50 residues, 1 to 50 (MAVTLVTSCASSSRFHFRSFSSSPSSLSSCFVRFQLLSRLRVSFAITPLY), are a transit peptide targeting the chloroplast. Residues Lys-350 and Asp-355 each coordinate Mn(2+). The active site involves Lys-362. 3 residues coordinate Mn(2+): Asp-375, Asp-435, and Glu-437. Residue Arg-439 is part of the active site.

Belongs to the peptidase M17 family. In terms of assembly, homohexamer (dimer of homotrimers). The cofactor is Mn(2+).

The protein resides in the plastid. Its subcellular location is the chloroplast. The enzyme catalyses Release of an N-terminal amino acid, Xaa-|-Yaa-, in which Xaa is preferably Leu, but may be other amino acids including Pro although not Arg or Lys, and Yaa may be Pro. Amino acid amides and methyl esters are also readily hydrolyzed, but rates on arylamides are exceedingly low.. The catalysed reaction is Release of N-terminal proline from a peptide.. Functionally, presumably involved in the processing and regular turnover of intracellular proteins. Catalyzes the removal of unsubstituted N-terminal amino acids from various peptides. Possesses Cys-Gly dipeptidase activity. This chain is Leucine aminopeptidase 3, chloroplastic, found in Arabidopsis thaliana (Mouse-ear cress).